A 215-amino-acid polypeptide reads, in one-letter code: MOB kinase activator-like 1A (215 aa).

A disordered region spans residues 1–27; the sequence is MSLFGLGRNQKTFRPKKSAPSGSKGAQ. Zn(2+)-binding residues include Cys79, Cys84, His161, and His166.

Belongs to the MOB1/phocein family. Interacts with SIK1 at the plasma membrane and in the nucleus. In terms of tissue distribution, constitutively expressed. In 3- to 4-day-old seedlings, expression is high in the shoot apical meristem and along the vasculature in cotyledons, hypocotyls and roots. At the root tip, expression is detected in columella and lateral root cap cells as well as in the stem cell niche around the quiescent center (QC). The levels of expression decrease progressively in the meristematic zone from the root tip towards the base of the root, becoming stronger again in the elongation zone. In flowers, expression appears localized in ovules and pollen.

Its subcellular location is the nucleus. It is found in the cell membrane. It localises to the vacuole membrane. Its function is as follows. Plays a key role in regulation of cell expansion and cell division. Required for proper plant development, the correct patterning of the root meristem and the control of root growth. Involved in both sporogenesis and gametogenesis. This is MOB kinase activator-like 1A from Arabidopsis thaliana (Mouse-ear cress).